The following is a 768-amino-acid chain: Polyadenylate-binding protein, cytoplasmic and nuclear (768 aa).

Residues 1–11 (MSAETATNPPV) are compositionally biased toward polar residues. Residues 1 to 52 (MSAETATNPPVDTTPGAAPESATNGSNANVAADTTAGEASQTTSSTTPTAQP) are disordered. A compositionally biased stretch (low complexity) spans 39 to 52 (ASQTTSSTTPTAQP). RRM domains are found at residues 55–133 (ASLY…WSQR), 143–220 (GNVF…HHIA), 236–314 (TNVY…RAQK), and 340–470 (VNLY…LAQR). Disordered regions lie at residues 374-428 (DFAP…EKKP), 633-662 (QQGM…NASP), and 739-768 (KNKG…ETKS). Gly residues predominate over residues 637–646 (GRPGQAGRGQ). One can recognise a PABC domain in the interval 662–739 (PNGLTLQVLN…ALTVYDEYVK (78 aa)). Over residues 753–768 (NKSKDASQETAEETKS) the composition is skewed to basic and acidic residues.

It belongs to the polyadenylate-binding protein type-1 family.

Its subcellular location is the cytoplasm. It is found in the nucleus. Binds the poly(A) tail of mRNA. Appears to be an important mediator of the multiple roles of the poly(A) tail in mRNA biogenesis, stability and translation. In the nucleus, involved in both mRNA cleavage and polyadenylation. Is also required for efficient mRNA export to the cytoplasm. Acts in concert with a poly(A)-specific nuclease (PAN) to affect poly(A) tail shortening, which may occur concomitantly with either nucleocytoplasmic mRNA transport or translational initiation. In the cytoplasm, stimulates translation initiation and regulates mRNA decay through translation termination-coupled poly(A) shortening, probably mediated by PAN. The sequence is that of Polyadenylate-binding protein, cytoplasmic and nuclear (PAB1) from Coccidioides immitis (strain RS) (Valley fever fungus).